The sequence spans 478 residues: UDP-N-acetylmuramate--L-alanine ligase (478 aa).

ATP is bound at residue 120–126; the sequence is GSHGKTT.

This sequence belongs to the MurCDEF family.

The protein resides in the cytoplasm. The catalysed reaction is UDP-N-acetyl-alpha-D-muramate + L-alanine + ATP = UDP-N-acetyl-alpha-D-muramoyl-L-alanine + ADP + phosphate + H(+). The protein operates within cell wall biogenesis; peptidoglycan biosynthesis. Its function is as follows. Cell wall formation. The protein is UDP-N-acetylmuramate--L-alanine ligase of Rickettsia felis (strain ATCC VR-1525 / URRWXCal2) (Rickettsia azadi).